The chain runs to 218 residues: MIVPGNLFILSAPSGAGKSSLINALLKPDNQASARAMQVSISHTTRDARPGENNGEHYHFVSVEEFKKQISLNAFYEYAEVFGNYYGTSEAAIDAQLSQGIDVFLDIDWQGAQQVRMKKPGVTTIFISPPSKEELESRLRGRGQDSDEVIASRMAQAQAECSHYNEFDYVIVNDDFEQALLDLTTIVNNQRLKCRQQSIAQQSLFSKLLNIEAVEPTE.

The Guanylate kinase-like domain occupies 5–188 (GNLFILSAPS…ALLDLTTIVN (184 aa)). Residue 12–19 (APSGAGKS) coordinates ATP.

It belongs to the guanylate kinase family.

Its subcellular location is the cytoplasm. The catalysed reaction is GMP + ATP = GDP + ADP. Essential for recycling GMP and indirectly, cGMP. This chain is Guanylate kinase, found in Colwellia psychrerythraea (strain 34H / ATCC BAA-681) (Vibrio psychroerythus).